Consider the following 92-residue polypeptide: Small ribosomal subunit protein uS19c (92 aa).

The protein belongs to the universal ribosomal protein uS19 family.

Its subcellular location is the plastid. The protein resides in the chloroplast. In terms of biological role, protein S19 forms a complex with S13 that binds strongly to the 16S ribosomal RNA. This chain is Small ribosomal subunit protein uS19c, found in Cyanidium caldarium (Red alga).